We begin with the raw amino-acid sequence, 190 residues long: Adenylate kinase (190 aa).

11–16 (GAGKGT) serves as a coordination point for ATP. The segment at 31 to 60 (STGDIFRFNLKNDTELGKQARVFMDNGELV) is NMP. AMP-binding positions include T32, R37, 58–60 (ELV), 86–89 (GYPR), and Q93. Residues 127–137 (ERGKTSGRADD) form an LID region. R128 provides a ligand contact to ATP. AMP is bound by residues R134 and R146. An ATP-binding site is contributed by G174.

This sequence belongs to the adenylate kinase family. Monomer.

It is found in the cytoplasm. It carries out the reaction AMP + ATP = 2 ADP. Its pathway is purine metabolism; AMP biosynthesis via salvage pathway; AMP from ADP: step 1/1. Functionally, catalyzes the reversible transfer of the terminal phosphate group between ATP and AMP. Plays an important role in cellular energy homeostasis and in adenine nucleotide metabolism. This is Adenylate kinase from Flavobacterium johnsoniae (strain ATCC 17061 / DSM 2064 / JCM 8514 / BCRC 14874 / CCUG 350202 / NBRC 14942 / NCIMB 11054 / UW101) (Cytophaga johnsonae).